The following is a 339-amino-acid chain: Dihydroorotate dehydrogenase (quinone) (339 aa).

FMN contacts are provided by residues 62–66 and threonine 86; that span reads AGMDK. Lysine 66 is a substrate binding site. Residue 111 to 115 participates in substrate binding; that stretch reads NRMGF. Positions 139 and 172 each coordinate FMN. Residue asparagine 172 coordinates substrate. Serine 175 functions as the Nucleophile in the catalytic mechanism. Asparagine 177 serves as a coordination point for substrate. 2 residues coordinate FMN: lysine 217 and threonine 245. A substrate-binding site is contributed by 246–247; sequence NT. Residues glycine 268, glycine 297, and 318-319 contribute to the FMN site; that span reads YS.

The protein belongs to the dihydroorotate dehydrogenase family. Type 2 subfamily. As to quaternary structure, monomer. The cofactor is FMN.

Its subcellular location is the cell membrane. The enzyme catalyses (S)-dihydroorotate + a quinone = orotate + a quinol. The protein operates within pyrimidine metabolism; UMP biosynthesis via de novo pathway; orotate from (S)-dihydroorotate (quinone route): step 1/1. Functionally, catalyzes the conversion of dihydroorotate to orotate with quinone as electron acceptor. This Shewanella sp. (strain MR-4) protein is Dihydroorotate dehydrogenase (quinone).